Reading from the N-terminus, the 132-residue chain is Ribosome-binding factor A (132 aa).

Belongs to the RbfA family. Monomer. Binds 30S ribosomal subunits, but not 50S ribosomal subunits or 70S ribosomes.

The protein resides in the cytoplasm. One of several proteins that assist in the late maturation steps of the functional core of the 30S ribosomal subunit. Associates with free 30S ribosomal subunits (but not with 30S subunits that are part of 70S ribosomes or polysomes). Required for efficient processing of 16S rRNA. May interact with the 5'-terminal helix region of 16S rRNA. The polypeptide is Ribosome-binding factor A (Pseudomonas entomophila (strain L48)).